A 63-amino-acid chain; its full sequence is Small integral membrane protein 43 (63 aa).

Important for interaction with SLC2A1 and SLC2A3 stretches follow at residues 7–29 (LLLYLALFFFLLFLLFLLLFVVI) and 51–57 (HREPWGF). Residues 9–29 (LYLALFFFLLFLLFLLLFVVI) form a helical membrane-spanning segment.

In terms of assembly, interacts with glucose transporters SLC2A1/GLUT1 and SLC2A3/GLUT3; the interactions may promote SLC2A1- and SLC2A3-mediated glucose transport to meet the energy needs of mesendoderm differentiation.

The protein localises to the cell membrane. Functionally, required for mesendoderm differentiation. Interacts with glucose transporters and promotes glucose uptake. Probably augments the glucose uptake capacity of glucose transporter proteins to meet the energy needs of mesendoderm differentiation. This Homo sapiens (Human) protein is Small integral membrane protein 43.